The chain runs to 266 residues: Eukaryotic translation initiation factor 3 subunit J (266 aa).

Disordered regions lie at residues 1–111 (MAPS…EKDA) and 217–266 (NEKM…DDFM). A compositionally biased stretch (acidic residues) spans 26 to 44 (DEEEEDVLDSWDAAEDSEV). Residues 40-82 (EDSEVEREKAAKAAEAKAKAEAEAAANKKSKAQRIQEKKAQRK) adopt a coiled-coil conformation. Composition is skewed to basic and acidic residues over residues 45 to 61 (EREK…KAEA) and 73 to 85 (RIQE…KADA). A compositionally biased stretch (acidic residues) spans 86–97 (DAEDSDDSDEDE). 2 stretches are compositionally biased toward basic and acidic residues: residues 98-111 (AERR…EKDA) and 218-230 (EKMK…DKGN). Residues 254–266 (SYDDDGLDDDDFM) are compositionally biased toward acidic residues.

This sequence belongs to the eIF-3 subunit J family. Component of the eukaryotic translation initiation factor 3 (eIF-3) complex.

It localises to the cytoplasm. Functionally, component of the eukaryotic translation initiation factor 3 (eIF-3) complex, which is involved in protein synthesis of a specialized repertoire of mRNAs and, together with other initiation factors, stimulates binding of mRNA and methionyl-tRNAi to the 40S ribosome. The eIF-3 complex specifically targets and initiates translation of a subset of mRNAs involved in cell proliferation. This chain is Eukaryotic translation initiation factor 3 subunit J (hcr1), found in Aspergillus niger (strain ATCC MYA-4892 / CBS 513.88 / FGSC A1513).